Here is a 139-residue protein sequence, read N- to C-terminus: Large ribosomal subunit protein uL16 (139 aa).

Residues 1-20 (MLIPRRVKHRKQHHPKRRGQ) are compositionally biased toward basic residues. The interval 1–25 (MLIPRRVKHRKQHHPKRRGQAKGGT) is disordered.

This sequence belongs to the universal ribosomal protein uL16 family. As to quaternary structure, part of the 50S ribosomal subunit.

Binds 23S rRNA and is also seen to make contacts with the A and possibly P site tRNAs. This chain is Large ribosomal subunit protein uL16, found in Streptomyces avermitilis (strain ATCC 31267 / DSM 46492 / JCM 5070 / NBRC 14893 / NCIMB 12804 / NRRL 8165 / MA-4680).